The sequence spans 480 residues: Ochratoxinase (480 aa).

Zn(2+) is bound by residues His-111, His-113, Lys-246, His-287, and His-307. Lys-246 is an active-site residue. Asp-378 is a catalytic residue.

This sequence belongs to the metallo-dependent hydrolases superfamily. Ochratoxinase amidase 2 family. In terms of assembly, homooctamer. Zn(2+) serves as cofactor.

The protein resides in the secreted. The catalysed reaction is ochratoxin A + H2O = ochratoxin alpha + L-phenylalanine. The Zn(2+)-specific chelator 1,10-phenanthroline inhibits the enzyme activity. Its function is as follows. Carboxypeptidase that catalyzes the release of a C-terminal amino acid with specific catalytic activity for aromatic amino acids such as phenylalanine. Is able to degrade ochratoxin A, one of the five major mycotoxins most harmful to humans and animals that is produced by Aspergillus and Penicillium species and occurs in a wide range of agricultural products. This is Ochratoxinase from Aspergillus niger (strain ATCC MYA-4892 / CBS 513.88 / FGSC A1513).